A 150-amino-acid chain; its full sequence is UPF0178 protein PP_5221 (150 aa).

The protein belongs to the UPF0178 family.

The polypeptide is UPF0178 protein PP_5221 (Pseudomonas putida (strain ATCC 47054 / DSM 6125 / CFBP 8728 / NCIMB 11950 / KT2440)).